A 647-amino-acid polypeptide reads, in one-letter code: Chaperone protein DnaK (647 aa).

Residue T198 is modified to Phosphothreonine; by autocatalysis. The tract at residues 606–634 (GASAEGMDPNQFQQGADNAGESNQADDDV) is disordered. A compositionally biased stretch (polar residues) spans 615-628 (NQFQQGADNAGESN).

It belongs to the heat shock protein 70 family.

In terms of biological role, acts as a chaperone. This is Chaperone protein DnaK from Psychrobacter cryohalolentis (strain ATCC BAA-1226 / DSM 17306 / VKM B-2378 / K5).